Here is a 220-residue protein sequence, read N- to C-terminus: Deoxyribose-phosphate aldolase 2 (220 aa).

Asp-89 acts as the Proton donor/acceptor in catalysis. Catalysis depends on Lys-151, which acts as the Schiff-base intermediate with acetaldehyde. The active-site Proton donor/acceptor is Lys-180.

This sequence belongs to the DeoC/FbaB aldolase family. DeoC type 1 subfamily.

The protein resides in the cytoplasm. The enzyme catalyses 2-deoxy-D-ribose 5-phosphate = D-glyceraldehyde 3-phosphate + acetaldehyde. It participates in carbohydrate degradation; 2-deoxy-D-ribose 1-phosphate degradation; D-glyceraldehyde 3-phosphate and acetaldehyde from 2-deoxy-alpha-D-ribose 1-phosphate: step 2/2. Its function is as follows. Catalyzes a reversible aldol reaction between acetaldehyde and D-glyceraldehyde 3-phosphate to generate 2-deoxy-D-ribose 5-phosphate. The polypeptide is Deoxyribose-phosphate aldolase 2 (Staphylococcus aureus (strain MSSA476)).